The primary structure comprises 142 residues: Large ribosomal subunit protein uL11 (142 aa).

The protein belongs to the universal ribosomal protein uL11 family. Part of the ribosomal stalk of the 50S ribosomal subunit. Interacts with L10 and the large rRNA to form the base of the stalk. L10 forms an elongated spine to which L12 dimers bind in a sequential fashion forming a multimeric L10(L12)X complex. In terms of processing, one or more lysine residues are methylated.

Forms part of the ribosomal stalk which helps the ribosome interact with GTP-bound translation factors. In Yersinia pseudotuberculosis serotype O:1b (strain IP 31758), this protein is Large ribosomal subunit protein uL11.